The chain runs to 254 residues: MAGHSKWANIKRQKARVDAKKGQTFTQLSRAIIVATRNGVPDPAGNFQLRTAIEKAKAAGIPNDNIERAIAKGAGTWENDSAFEEIRYEGYGPGGVAILIEALTDNRNRTAAALRAAFSKNGGNLGETGCVGWMFDHKGVIRLEGTIDEDKLLEASLEGQAQSYEFFDSEEEGQGAEVFTEVSNLERLNKVLQAAGFKVKEAELRWIPTNTLEVSDREQARFLLKLIDTLESLDHVQSVTANFDLVEELMLLDL.

This sequence belongs to the TACO1 family.

Its subcellular location is the cytoplasm. The sequence is that of Probable transcriptional regulatory protein MAE_13580 from Microcystis aeruginosa (strain NIES-843 / IAM M-2473).